The following is a 207-amino-acid chain: MTVMNLFFRPCQLQMGSGPLELMLKRPTQLTTFMNTRPGGSTQIRFISGNLDPVKRREDRLRKIFSKSRLLTRLNKNPKFSHYFDRLSEAGTVPTLTSFFILHEVTAILPLFLLWWLLYNLDLSDDFKLPNFLNGLMDSCHTAMEKFVGKRYQECLNKNKLILSGTVAYVTVKLLYPVRIFISIWGAPYFGKWLLLPFQKLKHLIKK.

The N-terminal 46 residues, 1 to 46 (MTVMNLFFRPCQLQMGSGPLELMLKRPTQLTTFMNTRPGGSTQIRF), are a transit peptide targeting the mitochondrion. The Mitochondrial matrix portion of the chain corresponds to 47 to 98 (ISGNLDPVKRREDRLRKIFSKSRLLTRLNKNPKFSHYFDRLSEAGTVPTLTS). The chain crosses the membrane as a helical span at residues 99-119 (FFILHEVTAILPLFLLWWLLY). The Mitochondrial intermembrane segment spans residues 120 to 177 (NLDLSDDFKLPNFLNGLMDSCHTAMEKFVGKRYQECLNKNKLILSGTVAYVTVKLLYP). The chain crosses the membrane as a helical span at residues 178–198 (VRIFISIWGAPYFGKWLLLPF). The Mitochondrial matrix portion of the chain corresponds to 199-207 (QKLKHLIKK).

Belongs to the MRX11 family. In terms of assembly, associates with the mitochondrial ribosome.

The protein localises to the mitochondrion. The protein resides in the mitochondrion inner membrane. In terms of biological role, component of MIOREX complexes, large expressome-like assemblies of ribosomes with factors involved in all the steps of post-transcriptional gene expression. This is MIOREX complex component 11 from Saccharomyces cerevisiae (strain ATCC 204508 / S288c) (Baker's yeast).